A 513-amino-acid polypeptide reads, in one-letter code: Activin receptor type-2A (513 aa).

A signal peptide spans 1–19 (MGAAAKLAFAVFLISCSSG). Over 20–135 (AILGRSETQE…TSNPVTPKPP (116 aa)) the chain is Extracellular. Intrachain disulfides connect Cys-30–Cys-60, Cys-50–Cys-78, Cys-85–Cys-104, Cys-91–Cys-103, and Cys-105–Cys-110. Residues Asn-43 and Asn-66 are each glycosylated (N-linked (GlcNAc...) asparagine). Residues 136-161 (YYNILLYSLVPLMLIAGIVICAFWVY) form a helical membrane-spanning segment. Over 162 to 513 (RHHKMAYPPV…VDFPPKESSL (352 aa)) the chain is Cytoplasmic. The Protein kinase domain occupies 192–485 (LQLLEVKARG…GERITQMQRL (294 aa)). ATP is bound by residues 198-206 (KARGRFGCV) and Lys-219. The active-site Proton acceptor is Asp-322.

It belongs to the protein kinase superfamily. TKL Ser/Thr protein kinase family. TGFB receptor subfamily. As to quaternary structure, part of a complex consisting of MAGI2/ARIP1, ACVR2A, ACVR1B and SMAD3. Interacts with MAGI2/ARIP1. Interacts with type I receptor ACVR1. Interacts with BMP7. Interacts with TSC22D1/TSC-22. Interacts with activin A/INHBA. Mg(2+) is required as a cofactor. Mn(2+) serves as cofactor. Brain, testis, intestine, liver and kidney.

It is found in the cell membrane. The enzyme catalyses L-threonyl-[receptor-protein] + ATP = O-phospho-L-threonyl-[receptor-protein] + ADP + H(+). The catalysed reaction is L-seryl-[receptor-protein] + ATP = O-phospho-L-seryl-[receptor-protein] + ADP + H(+). Its function is as follows. On ligand binding, forms a receptor complex consisting of two type II and two type I transmembrane serine/threonine kinases. Type II receptors phosphorylate and activate type I receptors which autophosphorylate, then bind and activate SMAD transcriptional regulators. Receptor for activin A, activin B and inhibin A. Mediates induction of adipogenesis by GDF6. The protein is Activin receptor type-2A of Mus musculus (Mouse).